The chain runs to 366 residues: Dihydroflavonol 4-reductase (366 aa).

NADP(+)-binding residues include lysine 45 and tyrosine 164.

The protein belongs to the NAD(P)-dependent epimerase/dehydratase family. Dihydroflavonol-4-reductase subfamily.

The catalysed reaction is a (2R,3S,4S)-leucoanthocyanidin + NADP(+) = a (2R,3R)-dihydroflavonol + NADPH + H(+). The enzyme catalyses (2S)-flavan-4-ol + NADP(+) = (2S)-flavanone + NADPH + H(+). Its pathway is pigment biosynthesis; anthocyanin biosynthesis. Bifunctional enzyme involved in flavonoid metabolism. The protein is Dihydroflavonol 4-reductase (DFR) of Gerbera hybrida (Daisy).